We begin with the raw amino-acid sequence, 572 residues long: Proteinaceous RNase P 1, chloroplastic/mitochondrial (572 aa).

A chloroplast and mitochondrion-targeting transit peptide spans 1-70 (MLRLTCFTPS…SRHLCTLPLA (70 aa)). 4 PPR repeats span residues 96-130 (PEAL…GVQL), 136-174 (NVLL…KVVP), 175-209 (NEAT…GIQP), and 210-244 (RLRS…EVVP). Positions 338–565 (MDENGVCKCC…DLQTSRQWLC (228 aa)) constitute a PRORP domain. Residues Cys-344 and Cys-347 each contribute to the Zn(2+) site. 4 residues coordinate Mn(2+): Asp-399, Asp-474, Asp-475, and Asp-493. Zn(2+) contacts are provided by His-548 and Cys-565.

The protein belongs to the PPR family. P subfamily. Mg(2+) is required as a cofactor. Mn(2+) serves as cofactor.

It is found in the mitochondrion. It localises to the plastid. Its subcellular location is the chloroplast. It carries out the reaction Endonucleolytic cleavage of RNA, removing 5'-extranucleotides from tRNA precursor.. Endonuclease RNase P responsible for the 5' maturation of tRNA precursors. Preferentially cleaves at the unusual cleavage site, but also able to cleave at the classical cleavage site. Also involved in the maturation of mRNAs in mitochondria. This chain is Proteinaceous RNase P 1, chloroplastic/mitochondrial (PRORP1), found in Arabidopsis thaliana (Mouse-ear cress).